The following is a 204-amino-acid chain: Pro-hevein (204 aa).

The signal sequence occupies residues 1 to 17 (MNIFIVVLLCLTGVAIA). The region spanning 18 to 60 (EQCGRQAGGKLCPNNLCCSQWGWCGSTDEYCSPDHNCQSNCKD) is the Chitin-binding type-1 domain. Cystine bridges form between C20-C35, C29-C41, C34-C48, and C54-C58. Residues 61–66 (SGEGVG) constitute a propeptide that is removed on maturation. Positions 68 to 189 (GSASNVLATY…VNYQFVDCGD (122 aa)) constitute a Barwin domain. 3 cysteine pairs are disulfide-bonded: C96–C128, C117–C151, and C131–C187.

In terms of processing, proteolytically processed to yield the two chains of the mature protein. Laticifer.

In terms of biological role, N-acetyl-D-glucosamine / N-acetyl-D-neuraminic acid binding lectin. Can inhibit fungal growth. The chain is Pro-hevein (HEV1) from Hevea brasiliensis (Para rubber tree).